The following is a 253-amino-acid chain: 5'/3'-nucleotidase SurE (253 aa).

Residues Asp8, Asp9, Ser39, and Asn92 each coordinate a divalent metal cation.

This sequence belongs to the SurE nucleotidase family. A divalent metal cation serves as cofactor.

It localises to the cytoplasm. It catalyses the reaction a ribonucleoside 5'-phosphate + H2O = a ribonucleoside + phosphate. The catalysed reaction is a ribonucleoside 3'-phosphate + H2O = a ribonucleoside + phosphate. The enzyme catalyses [phosphate](n) + H2O = [phosphate](n-1) + phosphate + H(+). Its function is as follows. Nucleotidase with a broad substrate specificity as it can dephosphorylate various ribo- and deoxyribonucleoside 5'-monophosphates and ribonucleoside 3'-monophosphates with highest affinity to 3'-AMP. Also hydrolyzes polyphosphate (exopolyphosphatase activity) with the preference for short-chain-length substrates (P20-25). Might be involved in the regulation of dNTP and NTP pools, and in the turnover of 3'-mononucleotides produced by numerous intracellular RNases (T1, T2, and F) during the degradation of various RNAs. The polypeptide is 5'/3'-nucleotidase SurE (Erwinia tasmaniensis (strain DSM 17950 / CFBP 7177 / CIP 109463 / NCPPB 4357 / Et1/99)).